Consider the following 686-residue polypeptide: WD repeat-containing protein 93 (686 aa).

The span at 1-10 (MSFPRGSQTQ) shows a compositional bias: polar residues. A disordered region spans residues 1 to 40 (MSFPRGSQTQKIKHPIGTRKGPLEVPPPTEKDWPKDDEQD). Residues 29-40 (TEKDWPKDDEQD) show a composition bias toward basic and acidic residues. The stretch at 410 to 449 (PCAAPIAVSQLSCSSSYLVLACEDGVLTLWDLAKGFPLGV) is one WD repeat.

The polypeptide is WD repeat-containing protein 93 (WDR93) (Homo sapiens (Human)).